Reading from the N-terminus, the 104-residue chain is DNA-directed RNA polymerase subunit Rpo13 (104 aa).

Disordered stretches follow at residues 1 to 33 (MVSGMSTDEEKEGTSDEEVNEEKEVEETSEDEF) and 78 to 104 (RDSRRKAKKAVSKKVKKTKKKEKSVEG). The span at 7-31 (TDEEKEGTSDEEVNEEKEVEETSED) shows a compositional bias: acidic residues. Positions 80–104 (SRRKAKKAVSKKVKKTKKKEKSVEG) are enriched in basic residues.

It belongs to the archaeal Rpo13 RNA polymerase subunit family. As to quaternary structure, part of the 13-subunit RNA polymerase complex.

Its subcellular location is the cytoplasm. The enzyme catalyses RNA(n) + a ribonucleoside 5'-triphosphate = RNA(n+1) + diphosphate. DNA-dependent RNA polymerase (RNAP) catalyzes the transcription of DNA into RNA using the four ribonucleoside triphosphates as substrates. Probably binds dsDNA. The protein is DNA-directed RNA polymerase subunit Rpo13 of Saccharolobus solfataricus (strain ATCC 35092 / DSM 1617 / JCM 11322 / P2) (Sulfolobus solfataricus).